The sequence spans 96 residues: Nucleoid-associated protein TC_0612 (96 aa).

This sequence belongs to the YbaB/EbfC family. As to quaternary structure, homodimer.

It localises to the cytoplasm. It is found in the nucleoid. In terms of biological role, binds to DNA and alters its conformation. May be involved in regulation of gene expression, nucleoid organization and DNA protection. The polypeptide is Nucleoid-associated protein TC_0612 (Chlamydia muridarum (strain MoPn / Nigg)).